The chain runs to 180 residues: Adenine phosphoribosyltransferase (180 aa).

Ala-2 carries the N-acetylalanine modification. Ser-15 and Ser-30 each carry phosphoserine. The residue at position 60 (Tyr-60) is a Phosphotyrosine. Ser-66 carries the post-translational modification Phosphoserine. Thr-135 bears the Phosphothreonine mark.

The protein belongs to the purine/pyrimidine phosphoribosyltransferase family. Homodimer.

Its subcellular location is the cytoplasm. The catalysed reaction is AMP + diphosphate = 5-phospho-alpha-D-ribose 1-diphosphate + adenine. It functions in the pathway purine metabolism; AMP biosynthesis via salvage pathway; AMP from adenine: step 1/1. Its function is as follows. Catalyzes a salvage reaction resulting in the formation of AMP, that is energically less costly than de novo synthesis. The chain is Adenine phosphoribosyltransferase from Bos taurus (Bovine).